Here is a 522-residue protein sequence, read N- to C-terminus: Light-independent protochlorophyllide reductase subunit B (522 aa).

D36 is a [4Fe-4S] cluster binding site. The active-site Proton donor is the D290. G425–L426 contributes to the substrate binding site.

Belongs to the ChlB/BchB/BchZ family. In terms of assembly, protochlorophyllide reductase is composed of three subunits; ChlL, ChlN and ChlB. Forms a heterotetramer of two ChlB and two ChlN subunits. It depends on [4Fe-4S] cluster as a cofactor.

It catalyses the reaction chlorophyllide a + oxidized 2[4Fe-4S]-[ferredoxin] + 2 ADP + 2 phosphate = protochlorophyllide a + reduced 2[4Fe-4S]-[ferredoxin] + 2 ATP + 2 H2O. It functions in the pathway porphyrin-containing compound metabolism; chlorophyll biosynthesis (light-independent). Component of the dark-operative protochlorophyllide reductase (DPOR) that uses Mg-ATP and reduced ferredoxin to reduce ring D of protochlorophyllide (Pchlide) to form chlorophyllide a (Chlide). This reaction is light-independent. The NB-protein (ChlN-ChlB) is the catalytic component of the complex. The polypeptide is Light-independent protochlorophyllide reductase subunit B (Synechococcus sp. (strain CC9311)).